We begin with the raw amino-acid sequence, 187 residues long: UPF0301 protein YqgE (187 aa).

This sequence belongs to the UPF0301 (AlgH) family.

This chain is UPF0301 protein YqgE, found in Salmonella heidelberg (strain SL476).